The following is a 364-amino-acid chain: Isoflavone 4'-O-methyltransferase (364 aa).

Residues 206 to 209 (VGGG), D230, 230 to 231 (DQ), 250 to 251 (DM), and K264 contribute to the S-adenosyl-L-methionine site. Catalysis depends on H268, which acts as the Proton acceptor.

It belongs to the class I-like SAM-binding methyltransferase superfamily. Cation-independent O-methyltransferase family. COMT subfamily. As to quaternary structure, homodimer.

The catalysed reaction is a 4'-hydroxyisoflavone + S-adenosyl-L-methionine = a 4'-methoxyisoflavone + S-adenosyl-L-homocysteine + H(+). It catalyses the reaction (2R,3S)-2,4',7-trihydroxyisoflavanone + S-adenosyl-L-methionine = (2R,3S)-2,7-dihydroxy-4'-methoxyisoflavanone + S-adenosyl-L-homocysteine + H(+). 2-hydroxyisoflavanone 4'-O-methyltransferase involved in the biosynthesis of the phytoalexin medicarpin. Has also an in vitro (+)-6a-hydroxymaackiain-3-0-methyltransferase activity, converting the pterocarpan 6a-hydroxymaackiain into pisatin. No activity with di- or trihydroxylated isoflavones, including daidzein and genistein, or with (-)-medicarpin and maackiain. The dual activity for either 3- or 4'-O-methylation depends upon substrate availability. The chain is Isoflavone 4'-O-methyltransferase (HI4'OMT) from Medicago truncatula (Barrel medic).